We begin with the raw amino-acid sequence, 238 residues long: uncharacterized protein (238 aa).

The next 3 membrane-spanning stretches (helical) occupy residues 19–39 (IVIE…FQII), 79–99 (IILF…AEFI), and 141–161 (YVEI…LIKC).

The protein localises to the cell membrane. This is an uncharacterized protein from Methanocaldococcus jannaschii (strain ATCC 43067 / DSM 2661 / JAL-1 / JCM 10045 / NBRC 100440) (Methanococcus jannaschii).